Here is a 399-residue protein sequence, read N- to C-terminus: 3-dehydroquinate synthase (399 aa).

This sequence belongs to the archaeal-type DHQ synthase family.

It carries out the reaction 2-amino-2,3,7-trideoxy-D-lyxo-hept-6-ulosonate + NAD(+) + H2O = 3-dehydroquinate + NH4(+) + NADH + H(+). Catalyzes the oxidative deamination and cyclization of 2-amino-3,7-dideoxy-D-threo-hept-6-ulosonic acid (ADH) to yield 3-dehydroquinate (DHQ), which is fed into the canonical shikimic pathway of aromatic amino acid biosynthesis. The sequence is that of 3-dehydroquinate synthase from Haloquadratum walsbyi (strain DSM 16790 / HBSQ001).